We begin with the raw amino-acid sequence, 422 residues long: Leucine-rich repeat protein 1 (422 aa).

LRR repeat units follow at residues 184–207 (LKNLTKLDLSHNCIKKLPATIGDL), 209–230 (HLQELNLNDNQLETFSVPLCTS), 233–258 (QKSLHSLDLSKNKIKALPVQFCQFRE), 260–279 (TNLNLNDNELIHLPFKIGQL), 280–301 (TNLRFLSAARNKLRNLPSEFKM), and 304–327 (LEYLDLFGNTFEKPEVIPIIKLQV).

As to quaternary structure, component of the probable ECS(LRR1) E3 ubiquitin-protein ligase complex which contains CUL2, RBX1, Elongin BC complex and LRR1. Interacts with CUL2, RBX1, ELOB and ELOC.

The protein localises to the nucleus. The protein operates within protein modification; protein ubiquitination. Substrate recognition subunit of an ECS (Elongin BC-CUL2/5-SOCS-box protein) E3 ubiquitin-protein ligase complex which mediates the ubiquitination and subsequent proteasomal degradation of target proteins. ECS(LRR1) ubiquitinates MCM7 and promotes CMG replisome disassembly by VCP and chromatin extraction during S-phase. May negatively regulate the 4-1BB-mediated signaling cascades which result in the activation of NK-kappaB and JNK1. This Mus musculus (Mouse) protein is Leucine-rich repeat protein 1.